The primary structure comprises 485 residues: Protein nucleotidyltransferase YdiU (485 aa).

Residues G90, G92, R93, K113, D125, G126, R176, and R183 each contribute to the ATP site. The active-site Proton acceptor is D252. Positions 253 and 262 each coordinate Mg(2+). D262 is a binding site for ATP.

Belongs to the SELO family. Requires Mg(2+) as cofactor. Mn(2+) is required as a cofactor.

It carries out the reaction L-seryl-[protein] + ATP = 3-O-(5'-adenylyl)-L-seryl-[protein] + diphosphate. The catalysed reaction is L-threonyl-[protein] + ATP = 3-O-(5'-adenylyl)-L-threonyl-[protein] + diphosphate. It catalyses the reaction L-tyrosyl-[protein] + ATP = O-(5'-adenylyl)-L-tyrosyl-[protein] + diphosphate. The enzyme catalyses L-histidyl-[protein] + UTP = N(tele)-(5'-uridylyl)-L-histidyl-[protein] + diphosphate. It carries out the reaction L-seryl-[protein] + UTP = O-(5'-uridylyl)-L-seryl-[protein] + diphosphate. The catalysed reaction is L-tyrosyl-[protein] + UTP = O-(5'-uridylyl)-L-tyrosyl-[protein] + diphosphate. Functionally, nucleotidyltransferase involved in the post-translational modification of proteins. It can catalyze the addition of adenosine monophosphate (AMP) or uridine monophosphate (UMP) to a protein, resulting in modifications known as AMPylation and UMPylation. In Aliivibrio fischeri (strain ATCC 700601 / ES114) (Vibrio fischeri), this protein is Protein nucleotidyltransferase YdiU.